Reading from the N-terminus, the 213-residue chain is ATP-dependent Clp protease proteolytic subunit 1 (213 aa).

The Nucleophile role is filled by S108. H133 is a catalytic residue.

The protein belongs to the peptidase S14 family. As to quaternary structure, fourteen ClpP subunits assemble into 2 heptameric rings which stack back to back to give a disk-like structure with a central cavity, resembling the structure of eukaryotic proteasomes.

It localises to the cytoplasm. It catalyses the reaction Hydrolysis of proteins to small peptides in the presence of ATP and magnesium. alpha-casein is the usual test substrate. In the absence of ATP, only oligopeptides shorter than five residues are hydrolyzed (such as succinyl-Leu-Tyr-|-NHMec, and Leu-Tyr-Leu-|-Tyr-Trp, in which cleavage of the -Tyr-|-Leu- and -Tyr-|-Trp bonds also occurs).. In terms of biological role, cleaves peptides in various proteins in a process that requires ATP hydrolysis. Has a chymotrypsin-like activity. Plays a major role in the degradation of misfolded proteins. The polypeptide is ATP-dependent Clp protease proteolytic subunit 1 (Frankia casuarinae (strain DSM 45818 / CECT 9043 / HFP020203 / CcI3)).